The chain runs to 301 residues: Phospholipase A1 VesT1.02 (301 aa).

6 disulfides stabilise this stretch: cysteine 87-cysteine 294, cysteine 176-cysteine 245, cysteine 181-cysteine 262, cysteine 219-cysteine 228, cysteine 240-cysteine 246, and cysteine 267-cysteine 269. Serine 137 functions as the Nucleophile in the catalytic mechanism. Aspartate 165 (charge relay system) is an active-site residue. The active-site Charge relay system is histidine 230.

Belongs to the AB hydrolase superfamily. Lipase family. Is not glycosylated. As to expression, expressed by the venom gland.

The protein resides in the secreted. The catalysed reaction is a 1,2-diacyl-sn-glycero-3-phosphocholine + H2O = a 2-acyl-sn-glycero-3-phosphocholine + a fatty acid + H(+). Functionally, catalyzes the hydrolysis of phosphatidylcholine with phospholipase A1 activity. Shows hemolytic activity. The protein is Phospholipase A1 VesT1.02 of Vespa tropica (Greater banded hornet).